Consider the following 471-residue polypeptide: Glutamate--tRNA ligase (471 aa).

The 'HIGH' region signature appears at 9–19 (PSPTGYLHVGG). 4 residues coordinate Zn(2+): cysteine 98, cysteine 100, cysteine 125, and histidine 127. Residues 237-241 (KLSKR) carry the 'KMSKS' region motif. Lysine 240 contacts ATP.

The protein belongs to the class-I aminoacyl-tRNA synthetase family. Glutamate--tRNA ligase type 1 subfamily. In terms of assembly, monomer. Zn(2+) is required as a cofactor.

It localises to the cytoplasm. The catalysed reaction is tRNA(Glu) + L-glutamate + ATP = L-glutamyl-tRNA(Glu) + AMP + diphosphate. Catalyzes the attachment of glutamate to tRNA(Glu) in a two-step reaction: glutamate is first activated by ATP to form Glu-AMP and then transferred to the acceptor end of tRNA(Glu). This is Glutamate--tRNA ligase from Escherichia coli O1:K1 / APEC.